Consider the following 203-residue polypeptide: Transmembrane emp24 domain-containing protein (203 aa).

Residues 1 to 22 form the signal peptide; sequence MASIRLLPSCIVLMFLARSSLC. Over 23 to 170 the chain is Lumenal; sequence YFITIDAHGE…RSINDNTNSR (148 aa). Residues 32 to 114 form the GOLD domain; it reads EECFHDKVTS…PKVLKFSMDI (83 aa). The helical transmembrane segment at 171-191 threads the bilayer; the sequence is VVWWSFFESLVLVAMTLGQVY. Over 192–203 the chain is Cytoplasmic; the sequence is YLKRFFEVRRVV.

The protein belongs to the EMP24/GP25L family.

The protein localises to the cytoplasmic vesicle membrane. In terms of biological role, could have a role in the budding of coatomer-coated and other species of coated vesicles. This Nematostella vectensis (Starlet sea anemone) protein is Transmembrane emp24 domain-containing protein.